Reading from the N-terminus, the 288-residue chain is Histone H3-like centromeric protein hcp-3 (288 aa).

The segment at 96-194 is disordered; it reads YHARKEQARR…VTKTRRYRPG (99 aa). Positions 178–193 are enriched in basic residues; the sequence is MRAGRNRVTKTRRYRP. The interval 191–288 is H3-like; the sequence is YRPGQKALEE…LYRRLCLRHL (98 aa).

This sequence belongs to the histone H3 family. In terms of assembly, forms a nucleosome-like histone octamer containing two molecules each of H2A, H2B, hcp-3 and H4 assembled in one hcp-3-H4 heterotetramer and two H2A-H2B heterodimers. The hcp-3-H4 heterotetramer is more compact and structurally more rigid than corresponding H3-H4 heterotetramers. Interacts with knl-2. Interacts with lin-53.

Its subcellular location is the nucleus. The protein resides in the chromosome. The protein localises to the centromere. It localises to the kinetochore. In terms of biological role, histone H3-like variant which exclusively replaces conventional H3 in the nucleosome core of centromeric chromatin at the inner plate of the kinetochore. Required for recruitment and assembly of kinetochore proteins, mitotic progression and chromosome segregation. May serve as an epigenetic mark that propagates centromere identity through replication and cell division. Might promote cleavage furrow stability during cytokinesis. Not required for chromosome segregation during meiosis. The protein is Histone H3-like centromeric protein hcp-3 of Caenorhabditis elegans.